The primary structure comprises 218 residues: Pyridoxine/pyridoxamine 5'-phosphate oxidase (218 aa).

Substrate-binding positions include 14–17 and Lys72; that span reads RREY. Residues 67–72, 82–83, Arg88, Lys89, and Gln111 each bind FMN; these read RIVLLK and YT. 3 residues coordinate substrate: Tyr129, Arg133, and Ser137. FMN-binding positions include 146 to 147 and Trp191; that span reads QS. 197-199 contacts substrate; it reads RLH. Arg201 is a binding site for FMN.

Belongs to the pyridoxamine 5'-phosphate oxidase family. Homodimer. FMN is required as a cofactor.

The enzyme catalyses pyridoxamine 5'-phosphate + O2 + H2O = pyridoxal 5'-phosphate + H2O2 + NH4(+). The catalysed reaction is pyridoxine 5'-phosphate + O2 = pyridoxal 5'-phosphate + H2O2. It functions in the pathway cofactor metabolism; pyridoxal 5'-phosphate salvage; pyridoxal 5'-phosphate from pyridoxamine 5'-phosphate: step 1/1. Its pathway is cofactor metabolism; pyridoxal 5'-phosphate salvage; pyridoxal 5'-phosphate from pyridoxine 5'-phosphate: step 1/1. In terms of biological role, catalyzes the oxidation of either pyridoxine 5'-phosphate (PNP) or pyridoxamine 5'-phosphate (PMP) into pyridoxal 5'-phosphate (PLP). This chain is Pyridoxine/pyridoxamine 5'-phosphate oxidase, found in Escherichia coli O157:H7.